Here is a 264-residue protein sequence, read N- to C-terminus: Small ribosomal subunit protein eS1 (264 aa).

A disordered region spans residues 232–264 (HGEGGGAGKPSGDEAGTKVERADGYEPPVQESV). The span at 242–255 (SGDEAGTKVERADG) shows a compositional bias: basic and acidic residues.

This sequence belongs to the eukaryotic ribosomal protein eS1 family. Component of the small ribosomal subunit. Mature ribosomes consist of a small (40S) and a large (60S) subunit. The 40S subunit contains about 33 different proteins and 1 molecule of RNA (18S). The 60S subunit contains about 49 different proteins and 3 molecules of RNA (28S, 5.8S and 5S). Part of the small subunit (SSU) processome, composed of more than 70 proteins and the RNA chaperone small nucleolar RNA (snoRNA) U3.

Its subcellular location is the cytoplasm. It is found in the nucleus. The protein localises to the nucleolus. Component of the small ribosomal subunit. The ribosome is a large ribonucleoprotein complex responsible for the synthesis of proteins in the cell. Part of the small subunit (SSU) processome, first precursor of the small eukaryotic ribosomal subunit. During the assembly of the SSU processome in the nucleolus, many ribosome biogenesis factors, an RNA chaperone and ribosomal proteins associate with the nascent pre-rRNA and work in concert to generate RNA folding, modifications, rearrangements and cleavage as well as targeted degradation of pre-ribosomal RNA by the RNA exosome. May play a role during erythropoiesis. The chain is Small ribosomal subunit protein eS1 from Taeniopygia guttata (Zebra finch).